A 707-amino-acid chain; its full sequence is Elongation factor G (707 aa).

In terms of domain architecture, tr-type G spans 8 to 288 (QFTRNIGIMA…AVCKFLPSPA (281 aa)). GTP-binding positions include 17-24 (AHIDAGKT), 85-89 (DTPGH), and 139-142 (NKMD). Residues 288-308 (ADTPTVEGTDPSDPNKVIERK) are disordered.

The protein belongs to the TRAFAC class translation factor GTPase superfamily. Classic translation factor GTPase family. EF-G/EF-2 subfamily.

It is found in the cytoplasm. In terms of biological role, catalyzes the GTP-dependent ribosomal translocation step during translation elongation. During this step, the ribosome changes from the pre-translocational (PRE) to the post-translocational (POST) state as the newly formed A-site-bound peptidyl-tRNA and P-site-bound deacylated tRNA move to the P and E sites, respectively. Catalyzes the coordinated movement of the two tRNA molecules, the mRNA and conformational changes in the ribosome. In Porphyromonas gingivalis (strain ATCC 33277 / DSM 20709 / CIP 103683 / JCM 12257 / NCTC 11834 / 2561), this protein is Elongation factor G.